A 158-amino-acid chain; its full sequence is Globin CTT-I/CTT-IA (158 aa).

The N-terminal stretch at 1-15 is a signal peptide; the sequence is MKFLILALCVAAAMA. The Globin domain maps to 16-158; it reads GPSGDQIAAA…FVFSTLKNEL (143 aa). Positions 74 and 109 each coordinate heme b.

This sequence belongs to the globin family. As to quaternary structure, monomer.

In Chironomus thummi thummi (Midge), this protein is Globin CTT-I/CTT-IA (CTT-1).